A 462-amino-acid polypeptide reads, in one-letter code: Nuclear distribution protein PAC1 (462 aa).

The region spanning 9 to 41 (QAEELHKAIIAYLGVINAPKTAAAFREEVNFSA) is the LisH domain. Residues 60–87 (TSVVRLQKKVLELEQRNQSLQSELDSTT) are a coiled coil. The span at 78 to 99 (SLQSELDSTTPTSLLRRNQDPS) shows a compositional bias: polar residues. The disordered stretch occupies residues 78–103 (SLQSELDSTTPTSLLRRNQDPSSWLP). WD repeat units follow at residues 113-154 (SHRS…RTVK), 156-196 (HTKG…KNIR), 200-247 (GHDH…CVKT), 250-289 (GHADWVRDVSPSFDGRWLLSAGNDQTARLWDASSGEAKCT), 292-352 (GHEH…IKTL), 354-393 (GHDNWVRALIFHPGGKYLLSASDDKTIRCWDLTQEGRCVK), 398-445 (AHSH…AGIR), and 447-462 (VIATGCVDLNVRIFAS). Positions 414-434 (KDAPTNGDAPNGTTANGASKK) are disordered.

Belongs to the WD repeat LIS1/nudF family. In terms of assembly, self-associates. Interacts with NDL1 and dynein.

It localises to the cytoplasm. The protein resides in the cytoskeleton. Its subcellular location is the spindle pole. Functionally, positively regulates the activity of the minus-end directed microtubule motor protein dynein. May enhance dynein-mediated microtubule sliding by targeting dynein to the microtubule plus end. Required for nuclear migration during vegetative growth as well as development. Required for retrograde early endosome (EE) transport from the hyphal tip. Required for localization of dynein to the mitotic spindle poles. Recruits additional proteins to the dynein complex at SPBs. The protein is Nuclear distribution protein PAC1 of Phaeosphaeria nodorum (strain SN15 / ATCC MYA-4574 / FGSC 10173) (Glume blotch fungus).